We begin with the raw amino-acid sequence, 160 residues long: ATP synthase subunit b (160 aa).

A helical membrane pass occupies residues 15–35; the sequence is LVIVIGLLFWFLRGFLGGILE.

This sequence belongs to the ATPase B chain family. F-type ATPases have 2 components, F(1) - the catalytic core - and F(0) - the membrane proton channel. F(1) has five subunits: alpha(3), beta(3), gamma(1), delta(1), epsilon(1). F(0) has four main subunits: a(1), b(1), b'(1) and c(10-14). The alpha and beta chains form an alternating ring which encloses part of the gamma chain. F(1) is attached to F(0) by a central stalk formed by the gamma and epsilon chains, while a peripheral stalk is formed by the delta, b and b' chains.

Its subcellular location is the cellular thylakoid membrane. Functionally, f(1)F(0) ATP synthase produces ATP from ADP in the presence of a proton or sodium gradient. F-type ATPases consist of two structural domains, F(1) containing the extramembraneous catalytic core and F(0) containing the membrane proton channel, linked together by a central stalk and a peripheral stalk. During catalysis, ATP synthesis in the catalytic domain of F(1) is coupled via a rotary mechanism of the central stalk subunits to proton translocation. In terms of biological role, component of the F(0) channel, it forms part of the peripheral stalk, linking F(1) to F(0). The polypeptide is ATP synthase subunit b (Synechococcus sp. (strain CC9605)).